Here is a 419-residue protein sequence, read N- to C-terminus: Innexin inx5 (419 aa).

At 1-21 (MFSAVKPLSKYLQFKSIRIYD) the chain is on the cytoplasmic side. Residues 22–42 (SVFTIHSRCTVVILLTCSLLL) traverse the membrane as a helical segment. The Extracellular segment spans residues 43–162 (SARQYFGDPI…QTERQYLRYY (120 aa)). A helical membrane pass occupies residues 163-183 (QWVIILLLFQSFVFYFPSCLW). At 184–238 (KVWEGRRLKQLCSEVGDALLSEETYNTRLRMLVKYFTTDYEDMHFCYMAKYVFCE) the chain is on the cytoplasmic side. The helical transmembrane segment at 239-259 (VLNFLISVVNIIVLEVFLNGF) threads the bilayer. The Extracellular portion of the chain corresponds to 260-320 (WSKYLRALAT…ILPLNILNEK (61 aa)). A helical membrane pass occupies residues 321-341 (IFVFLWAWFLLMALMSGLNLL). Residues 342-419 (CRLAMICSRY…ASGSTLESPV (78 aa)) are Cytoplasmic-facing.

Belongs to the pannexin family. Expressed in the cortex of the pupal CNS and at low levels in the wing imaginal disk.

It is found in the cell membrane. The protein resides in the cell junction. The protein localises to the gap junction. Structural component of the gap junctions. This chain is Innexin inx5 (Inx5), found in Drosophila melanogaster (Fruit fly).